Reading from the N-terminus, the 1237-residue chain is Zinc finger protein 687 (1237 aa).

Disordered regions lie at residues 1-80 (MGDM…PDIS) and 96-330 (EALA…PLKV). The span at 97-111 (ALAGGSAGDGAQAAG) shows a compositional bias: low complexity. Phosphoserine occurs at positions 102, 129, and 140. Residues 132-144 (PSLPGTPHSPAPP) are compositionally biased toward pro residues. The residue at position 148 (Thr-148) is a Phosphothreonine. 6 positions are modified to phosphoserine: Ser-227, Ser-242, Ser-251, Ser-253, Ser-266, and Ser-271. A compositionally biased stretch (polar residues) spans 234–244 (LAQQGSGSSPK). A Glycyl lysine isopeptide (Lys-Gly) (interchain with G-Cter in SUMO2) cross-link involves residue Lys-285. Residues 297–310 (SSPGSPQSPSSGAE) show a composition bias toward low complexity. Residues Lys-336 and Lys-372 each participate in a glycyl lysine isopeptide (Lys-Gly) (interchain with G-Cter in SUMO2) cross-link. A Phosphoserine modification is found at Ser-374. Thr-377 is subject to Phosphothreonine. Glycyl lysine isopeptide (Lys-Gly) (interchain with G-Cter in SUMO2) cross-links involve residues Lys-384, Lys-397, and Lys-422. The residue at position 433 (Ser-433) is a Phosphoserine. Residues Lys-435, Lys-439, Lys-451, and Lys-464 each participate in a glycyl lysine isopeptide (Lys-Gly) (interchain with G-Cter in SUMO2) cross-link. At Ser-495 the chain carries Phosphoserine. The C2H2-type 1; degenerate zinc-finger motif lies at 533-552 (YRCLECGDAFSLEKSLARHY). C2H2-type zinc fingers lie at residues 705–727 (NVCP…QRMH), 764–787 (YRCP…QTSH), 792–815 (HKCP…YSQH), 827–849 (YKCA…FDQH), and 858–881 (FKCP…KNTH). The segment covering 880-890 (THQSGRLEETA) has biased composition (basic and acidic residues). The segment at 880–957 (THQSGRLEET…LGSKGLKGGG (78 aa)) is disordered. Thr-900 carries the post-translational modification Phosphothreonine. Low complexity predominate over residues 915-925 (AAPATEESSSS). Lys-954 participates in a covalent cross-link: Glycyl lysine isopeptide (Lys-Gly) (interchain with G-Cter in SUMO2). C2H2-type zinc fingers lie at residues 963–986 (WTCG…KKEH) and 993–1016 (FPCR…RVNH). Lys-1043 participates in a covalent cross-link: Glycyl lysine isopeptide (Lys-Gly) (interchain with G-Cter in SUMO2). A disordered region spans residues 1051–1121 (LQLGAQSPGR…LRYRSSSSTE (71 aa)). Residue Ser-1057 is modified to Phosphoserine. Position 1060 is an omega-N-methylarginine (Arg-1060). Residues Ser-1082, Ser-1083, and Ser-1085 each carry the phosphoserine modification. Residue Arg-1101 is modified to Omega-N-methylarginine. Ser-1106 and Ser-1118 each carry phosphoserine. A C2H2-type 9 zinc finger spans residues 1135 to 1158 (QQCLDCGLCFASPGSLSRHRFISH). The interval 1159–1195 (KKRRGVGKASALGLGDGEEEAPPSRSDPDGGDSPLPA) is disordered. 3 positions are modified to phosphoserine: Ser-1184, Ser-1191, and Ser-1211. The segment at 1200–1222 (LTCKVCGKSCDSPLNLKTHFRTH) adopts a C2H2-type 10 zinc-finger fold.

It belongs to the krueppel C2H2-type zinc-finger protein family. As to quaternary structure, interacts with ZMYND8. Widely expressed with highest levels in obvary, muscle, blood and lung.

It localises to the cytoplasm. The protein localises to the nucleus. Functionally, may be involved in transcriptional regulation. This chain is Zinc finger protein 687 (ZNF687), found in Homo sapiens (Human).